Consider the following 438-residue polypeptide: DNA primase DnaG (438 aa).

The Toprim domain maps to Asp169–Tyr243. The Mg(2+) site is built by Glu175, Asp217, and Asp219.

The protein belongs to the archaeal DnaG primase family. Forms a ternary complex with MCM helicase and DNA. Mg(2+) serves as cofactor.

The enzyme catalyses ssDNA + n NTP = ssDNA/pppN(pN)n-1 hybrid + (n-1) diphosphate.. Functionally, RNA polymerase that catalyzes the synthesis of short RNA molecules used as primers for DNA polymerase during DNA replication. This Methanococcus maripaludis (strain C5 / ATCC BAA-1333) protein is DNA primase DnaG.